We begin with the raw amino-acid sequence, 115 residues long: Probable non-functional immunoglobulin heavy variable 8-51-1 (115 aa).

Positions 1 to 17 (MLVCVLLYSFRLFGIQG) are cleaved as a signal peptide. A framework-1 region spans residues 18 to 42 (EAQLTESGGDLVHLEGPLRLSCAAS). Residues 19–115 (AQLTESGGDL…QNMAAFNCAG (97 aa)) form the Ig-like domain. The tract at residues 43-50 (WFTFSIYE) is complementarity-determining-1. Positions 51 to 67 (IHWVCQASGKGLEWVAV) are framework-2. A disulfide bridge connects residues Cys55 and Cys113. Positions 68–75 (IWRGESHQ) are complementarity-determining-2. The segment at 76 to 113 (YNADYVRGRLTTSRDNTKYMLYMQMISLRTQNMAAFNC) is framework-3. The interval 114 to 115 (AG) is complementarity-determining-3.

Immunoglobulins are composed of two identical heavy chains and two identical light chains; disulfide-linked.

It localises to the secreted. Its subcellular location is the cell membrane. In terms of biological role, probable non-functional open reading frame (ORF) of V region of the variable domain of immunoglobulin heavy chains. Non-functional ORF generally cannot participate in the synthesis of a productive immunoglobulin chain due to altered V-(D)-J or switch recombination and/or splicing site (at mRNA level) and/or conserved amino acid change (protein level). Immunoglobulins, also known as antibodies, are membrane-bound or secreted glycoproteins produced by B lymphocytes. In the recognition phase of humoral immunity, the membrane-bound immunoglobulins serve as receptors which, upon binding of a specific antigen, trigger the clonal expansion and differentiation of B lymphocytes into immunoglobulins-secreting plasma cells. Secreted immunoglobulins mediate the effector phase of humoral immunity, which results in the elimination of bound antigens. The antigen binding site is formed by the variable domain of one heavy chain, together with that of its associated light chain. Thus, each immunoglobulin has two antigen binding sites with remarkable affinity for a particular antigen. The variable domains are assembled by a process called V-(D)-J rearrangement and can then be subjected to somatic hypermutations which, after exposure to antigen and selection, allow affinity maturation for a particular antigen. The sequence is that of Probable non-functional immunoglobulin heavy variable 8-51-1 from Homo sapiens (Human).